The chain runs to 199 residues: ATP-dependent Clp protease proteolytic subunit 2 (199 aa).

The active-site Nucleophile is the S98. H123 is an active-site residue.

The protein belongs to the peptidase S14 family. Fourteen ClpP subunits assemble into 2 heptameric rings which stack back to back to give a disk-like structure with a central cavity, resembling the structure of eukaryotic proteasomes.

It is found in the cytoplasm. The enzyme catalyses Hydrolysis of proteins to small peptides in the presence of ATP and magnesium. alpha-casein is the usual test substrate. In the absence of ATP, only oligopeptides shorter than five residues are hydrolyzed (such as succinyl-Leu-Tyr-|-NHMec, and Leu-Tyr-Leu-|-Tyr-Trp, in which cleavage of the -Tyr-|-Leu- and -Tyr-|-Trp bonds also occurs).. Functionally, cleaves peptides in various proteins in a process that requires ATP hydrolysis. Has a chymotrypsin-like activity. Plays a major role in the degradation of misfolded proteins. The protein is ATP-dependent Clp protease proteolytic subunit 2 of Treponema pallidum (strain Nichols).